Reading from the N-terminus, the 173-residue chain is Putative 4-hydroxy-4-methyl-2-oxoglutarate aldolase (173 aa).

Substrate-binding positions include 89-92 (GGNL) and R111. D112 lines the a divalent metal cation pocket.

This sequence belongs to the class II aldolase/RraA-like family. In terms of assembly, homotrimer. A divalent metal cation is required as a cofactor.

It catalyses the reaction 4-hydroxy-4-methyl-2-oxoglutarate = 2 pyruvate. The catalysed reaction is oxaloacetate + H(+) = pyruvate + CO2. Catalyzes the aldol cleavage of 4-hydroxy-4-methyl-2-oxoglutarate (HMG) into 2 molecules of pyruvate. Also contains a secondary oxaloacetate (OAA) decarboxylase activity due to the common pyruvate enolate transition state formed following C-C bond cleavage in the retro-aldol and decarboxylation reactions. This Albidiferax ferrireducens (strain ATCC BAA-621 / DSM 15236 / T118) (Rhodoferax ferrireducens) protein is Putative 4-hydroxy-4-methyl-2-oxoglutarate aldolase.